Consider the following 556-residue polypeptide: Glucose-6-phosphate isomerase (556 aa).

Glu360 (proton donor) is an active-site residue. Active-site residues include His391 and Lys519.

Belongs to the GPI family.

The protein localises to the cytoplasm. It catalyses the reaction alpha-D-glucose 6-phosphate = beta-D-fructose 6-phosphate. The protein operates within carbohydrate biosynthesis; gluconeogenesis. It functions in the pathway carbohydrate degradation; glycolysis; D-glyceraldehyde 3-phosphate and glycerone phosphate from D-glucose: step 2/4. In terms of biological role, catalyzes the reversible isomerization of glucose-6-phosphate to fructose-6-phosphate. In Acinetobacter baumannii (strain SDF), this protein is Glucose-6-phosphate isomerase.